The primary structure comprises 106 residues: MKKNTHLDYKQVLFVDSSTGYKFVCGSTYQSDKTEVFEGQEYPVCYVSVSSSSHPFFTGSKRLVDAEGRVDKFLKRYSNVKPAQPVQVAEEPVAKGKKKPSLKKKK.

The disordered stretch occupies residues 85–106 (PVQVAEEPVAKGKKKPSLKKKK). Basic residues predominate over residues 95-106 (KGKKKPSLKKKK).

The protein belongs to the bacterial ribosomal protein bL31 family. Type B subfamily. In terms of assembly, part of the 50S ribosomal subunit.

In Chlamydia felis (strain Fe/C-56) (Chlamydophila felis), this protein is Large ribosomal subunit protein bL31B.